We begin with the raw amino-acid sequence, 78 residues long: MKTLLLTFLVVTIVCLDLGYTLICHQVHGLQTCEPAQKFCQKRTTMFFPNHPVLLMGCTYNCPTERYSVCCSTDKCNK.

The first 21 residues, M1–T21, serve as a signal peptide directing secretion. 4 cysteine pairs are disulfide-bonded: C24–C40, C33–C58, C62–C70, and C71–C76.

Belongs to the three-finger toxin family. Short-chain subfamily. As to expression, expressed by the venom gland.

It localises to the secreted. This three-finger toxin binds and inhibits the nicotinic acetylcholine receptor (nAChR). The chain is Short neurotoxin SNTX26 from Ophiophagus hannah (King cobra).